The sequence spans 455 residues: GTPase Der (455 aa).

EngA-type G domains follow at residues 3 to 167 (FTIA…PEPA) and 184 to 359 (IRVA…AVWN). Residues 9-16 (GRPNVGKS), 56-60 (DTAGL), 119-122 (NKSE), 190-197 (GRPNAGKS), 237-241 (DTAGL), and 302-305 (NKWD) each bind GTP. In terms of domain architecture, KH-like spans 360 to 444 (RRVATALLNR…PIRITLREKA (85 aa)).

This sequence belongs to the TRAFAC class TrmE-Era-EngA-EngB-Septin-like GTPase superfamily. EngA (Der) GTPase family. As to quaternary structure, associates with the 50S ribosomal subunit.

In terms of biological role, GTPase that plays an essential role in the late steps of ribosome biogenesis. This chain is GTPase Der, found in Nitrobacter winogradskyi (strain ATCC 25391 / DSM 10237 / CIP 104748 / NCIMB 11846 / Nb-255).